Consider the following 77-residue polypeptide: U8-lycotoxin-Ls1p (77 aa).

The N-terminal stretch at 1-20 (MKLMIFTGLVLFAIVSLIEA) is a signal peptide. Positions 21–26 (QAENEK) are excised as a propeptide.

It belongs to the neurotoxin 19 (CSTX) family. 08 (U8-Lctx) subfamily. Post-translationally, contains 4 disulfide bonds. Expressed by the venom gland.

The protein localises to the secreted. In Lycosa singoriensis (Wolf spider), this protein is U8-lycotoxin-Ls1p.